The chain runs to 546 residues: Oncoprotein-induced transcript 3 protein (546 aa).

The signal sequence occupies residues 1–19; it reads MPLSLLLTCLSTTVTLVSP. Residues Asn89 and Asn116 are each glycosylated (N-linked (GlcNAc...) asparagine). The region spanning 182–222 is the EGF-like; calcium-binding domain; that stretch reads DENECEHNNGGCSEICVNLKNSHRCACGVGRVLRSDGKTCE. Cystine bridges form between Cys186/Cys197, Cys193/Cys206, and Cys208/Cys221. The 256-residue stretch at 261-516 folds into the ZP domain; that stretch reads TCQVPVLCKS…SRCAQGCHRR (256 aa). The N-linked (GlcNAc...) asparagine glycan is linked to Asn299.

Liver-specific. Expressed only in the hepatocytes.

The protein resides in the nucleus envelope. Functionally, may be involved in hepatocellular function and development. In Mus musculus (Mouse), this protein is Oncoprotein-induced transcript 3 protein (Oit3).